The following is a 194-amino-acid chain: NAD(P)H-quinone oxidoreductase subunit I (194 aa).

4Fe-4S ferredoxin-type domains follow at residues 55 to 84 (GRIHFEFDKCIACEVCVRVCPINLPVVDWE) and 95 to 124 (NHYSIDFGVCIFCGNCVEYCPTNCLSMTEE). [4Fe-4S] cluster-binding residues include Cys-64, Cys-67, Cys-70, Cys-74, Cys-104, Cys-107, Cys-110, and Cys-114. The disordered stretch occupies residues 173–194 (DLPAGSRRAGLRPEEIVEQSQQ).

The protein belongs to the complex I 23 kDa subunit family. As to quaternary structure, NDH-1 is composed of at least 11 different subunits. The cofactor is [4Fe-4S] cluster.

It is found in the cellular thylakoid membrane. It catalyses the reaction a plastoquinone + NADH + (n+1) H(+)(in) = a plastoquinol + NAD(+) + n H(+)(out). The catalysed reaction is a plastoquinone + NADPH + (n+1) H(+)(in) = a plastoquinol + NADP(+) + n H(+)(out). Its function is as follows. NDH-1 shuttles electrons from an unknown electron donor, via FMN and iron-sulfur (Fe-S) centers, to quinones in the respiratory and/or the photosynthetic chain. The immediate electron acceptor for the enzyme in this species is believed to be plastoquinone. Couples the redox reaction to proton translocation, and thus conserves the redox energy in a proton gradient. This chain is NAD(P)H-quinone oxidoreductase subunit I (ndhI), found in Leptolyngbya boryana (Plectonema boryanum).